The chain runs to 247 residues: tRNA (guanine-N(7)-)-methyltransferase (247 aa).

Residues glycine 70, 93–94 (EI), 128–129 (NA), and leucine 148 each bind S-adenosyl-L-methionine. Aspartate 151 is a catalytic residue. 226–228 (SEE) contacts S-adenosyl-L-methionine.

It belongs to the class I-like SAM-binding methyltransferase superfamily. TrmB family.

The protein localises to the nucleus. The enzyme catalyses guanosine(46) in tRNA + S-adenosyl-L-methionine = N(7)-methylguanosine(46) in tRNA + S-adenosyl-L-homocysteine. The protein operates within tRNA modification; N(7)-methylguanine-tRNA biosynthesis. Functionally, catalyzes the formation of N(7)-methylguanine at position 46 (m7G46) in tRNA. In Drosophila virilis (Fruit fly), this protein is tRNA (guanine-N(7)-)-methyltransferase.